Here is a 55-residue protein sequence, read N- to C-terminus: Large ribosomal subunit protein bL33 (55 aa).

This sequence belongs to the bacterial ribosomal protein bL33 family.

In Ruegeria pomeroyi (strain ATCC 700808 / DSM 15171 / DSS-3) (Silicibacter pomeroyi), this protein is Large ribosomal subunit protein bL33.